The sequence spans 85 residues: Small ribosomal subunit protein bS16 (85 aa).

It belongs to the bacterial ribosomal protein bS16 family.

This is Small ribosomal subunit protein bS16 from Pelobacter propionicus (strain DSM 2379 / NBRC 103807 / OttBd1).